The chain runs to 287 residues: NH(3)-dependent NAD(+) synthetase (287 aa).

Position 53–60 (53–60 (GISGGQDS)) interacts with ATP. Asp-59 contacts Mg(2+). Residue Arg-146 coordinates deamido-NAD(+). Thr-166 is a binding site for ATP. Glu-171 contributes to the Mg(2+) binding site. Lys-179 and Asp-186 together coordinate deamido-NAD(+). Residues Lys-195 and Thr-217 each contribute to the ATP site. 266 to 267 (HK) contacts deamido-NAD(+).

It belongs to the NAD synthetase family. Homodimer.

It carries out the reaction deamido-NAD(+) + NH4(+) + ATP = AMP + diphosphate + NAD(+) + H(+). It participates in cofactor biosynthesis; NAD(+) biosynthesis; NAD(+) from deamido-NAD(+) (ammonia route): step 1/1. Catalyzes the ATP-dependent amidation of deamido-NAD to form NAD. Uses ammonia as a nitrogen source. In Deinococcus radiodurans (strain ATCC 13939 / DSM 20539 / JCM 16871 / CCUG 27074 / LMG 4051 / NBRC 15346 / NCIMB 9279 / VKM B-1422 / R1), this protein is NH(3)-dependent NAD(+) synthetase.